A 318-amino-acid polypeptide reads, in one-letter code: Ethyl acetate hydrolase (318 aa).

Catalysis depends on residues S165, D261, and H291.

The protein belongs to the 'GDXG' lipolytic enzyme family. Monomer.

The protein resides in the cytoplasm. It carries out the reaction ethyl acetate + H2O = ethanol + acetate + H(+). Inhibited by the serine protease inhibitor phenylmethylsulfonyl fluoride, the histidine reagent diethylpyrocarbonate and two sulfhydryl reagents, mercuric chloride and naphthol AS-D chloroacetate. Not inhibited by EDTA. Its function is as follows. Esterase that catalyzes the hydrolysis of ethyl acetate. Can also use propyl acetate and the chromogenic substrates alpha-naphthyl acetate, alpha-naphthyl propionate, alpha-naphthyl caproate and 4-nitrophenyl acetate, with a preference for short-chain aliphatic esters. Highest activity is obtained in vitro with propyl acetate, followed by ethyl acetate. In vivo, could be involved in pyoverdine biosynthesis, but its specific role and its in vivo substrate have not been identified. This chain is Ethyl acetate hydrolase, found in Pseudomonas putida (Arthrobacter siderocapsulatus).